The chain runs to 175 residues: NADH-ubiquinone oxidoreductase chain 6 (175 aa).

Transmembrane regions (helical) follow at residues 1 to 21, 25 to 45, 47 to 67, 88 to 108, and 149 to 169; these read MMMY…VGVS, SPIY…GVIL, FGGS…MLVV, VVLG…IYAL, and YGVW…VIIM.

This sequence belongs to the complex I subunit 6 family. In terms of assembly, core subunit of respiratory chain NADH dehydrogenase (Complex I) which is composed of 45 different subunits.

Its subcellular location is the mitochondrion inner membrane. It catalyses the reaction a ubiquinone + NADH + 5 H(+)(in) = a ubiquinol + NAD(+) + 4 H(+)(out). In terms of biological role, core subunit of the mitochondrial membrane respiratory chain NADH dehydrogenase (Complex I) which catalyzes electron transfer from NADH through the respiratory chain, using ubiquinone as an electron acceptor. Essential for the catalytic activity and assembly of complex I. This Balaenoptera physalus (Fin whale) protein is NADH-ubiquinone oxidoreductase chain 6 (MT-ND6).